We begin with the raw amino-acid sequence, 543 residues long: Chaperonin GroEL (543 aa).

Residues 29-32, 86-90, Gly413, 476-478, and Asp492 each bind ATP; these read TLGP, DGTTT, and NAA.

This sequence belongs to the chaperonin (HSP60) family. Forms a cylinder of 14 subunits composed of two heptameric rings stacked back-to-back. Interacts with the co-chaperonin GroES.

It localises to the cytoplasm. It catalyses the reaction ATP + H2O + a folded polypeptide = ADP + phosphate + an unfolded polypeptide.. Functionally, together with its co-chaperonin GroES, plays an essential role in assisting protein folding. The GroEL-GroES system forms a nano-cage that allows encapsulation of the non-native substrate proteins and provides a physical environment optimized to promote and accelerate protein folding. The protein is Chaperonin GroEL of Streptococcus pyogenes serotype M49 (strain NZ131).